We begin with the raw amino-acid sequence, 683 residues long: Cysteine-rich receptor-like protein kinase 28 (683 aa).

The first 24 residues, methionine 1–alanine 24, serve as a signal peptide directing secretion. Topologically, residues glutamine 25–lysine 288 are extracellular. 2 Gnk2-homologous domains span residues proline 32–isoleucine 136 and threonine 142–phenylalanine 251. Asparagine 43, asparagine 47, asparagine 73, and asparagine 153 each carry an N-linked (GlcNAc...) asparagine glycan. The tract at residues proline 263–glycine 283 is disordered. Residues valine 289–leucine 309 traverse the membrane as a helical segment. Residues leucine 310–arginine 683 lie on the Cytoplasmic side of the membrane. One can recognise a Protein kinase domain in the interval phenylalanine 361–threonine 641. ATP-binding positions include leucine 367–valine 375 and lysine 389. Tyrosine 434 bears the Phosphotyrosine mark. Catalysis depends on aspartate 486, which acts as the Proton acceptor. Serine 490 carries the phosphoserine modification. At threonine 528 the chain carries Phosphothreonine. Tyrosine 536 carries the post-translational modification Phosphotyrosine.

The protein belongs to the protein kinase superfamily. Ser/Thr protein kinase family. CRK subfamily.

Its subcellular location is the membrane. The catalysed reaction is L-seryl-[protein] + ATP = O-phospho-L-seryl-[protein] + ADP + H(+). The enzyme catalyses L-threonyl-[protein] + ATP = O-phospho-L-threonyl-[protein] + ADP + H(+). In Arabidopsis thaliana (Mouse-ear cress), this protein is Cysteine-rich receptor-like protein kinase 28 (CRK28).